The chain runs to 382 residues: Anhydro-N-acetylmuramic acid kinase (382 aa).

22 to 29 (GTSMDGVD) lines the ATP pocket.

This sequence belongs to the anhydro-N-acetylmuramic acid kinase family.

The enzyme catalyses 1,6-anhydro-N-acetyl-beta-muramate + ATP + H2O = N-acetyl-D-muramate 6-phosphate + ADP + H(+). Its pathway is amino-sugar metabolism; 1,6-anhydro-N-acetylmuramate degradation. It functions in the pathway cell wall biogenesis; peptidoglycan recycling. Its function is as follows. Catalyzes the specific phosphorylation of 1,6-anhydro-N-acetylmuramic acid (anhMurNAc) with the simultaneous cleavage of the 1,6-anhydro ring, generating MurNAc-6-P. Is required for the utilization of anhMurNAc either imported from the medium or derived from its own cell wall murein, and thus plays a role in cell wall recycling. The polypeptide is Anhydro-N-acetylmuramic acid kinase (Burkholderia cenocepacia (strain ATCC BAA-245 / DSM 16553 / LMG 16656 / NCTC 13227 / J2315 / CF5610) (Burkholderia cepacia (strain J2315))).